Reading from the N-terminus, the 388-residue chain is Succinate--CoA ligase [ADP-forming] subunit beta (388 aa).

The 236-residue stretch at 9–244 (KQLFARYGLP…QSQEDPREAQ (236 aa)) folds into the ATP-grasp domain. ATP-binding positions include Lys-46, 53–55 (GRG), Glu-99, Thr-102, and Glu-107. Mg(2+) is bound by residues Asn-199 and Asp-213. Substrate is bound by residues Asn-264 and 321–323 (GIV).

This sequence belongs to the succinate/malate CoA ligase beta subunit family. Heterotetramer of two alpha and two beta subunits. Requires Mg(2+) as cofactor.

The catalysed reaction is succinate + ATP + CoA = succinyl-CoA + ADP + phosphate. It carries out the reaction GTP + succinate + CoA = succinyl-CoA + GDP + phosphate. The protein operates within carbohydrate metabolism; tricarboxylic acid cycle; succinate from succinyl-CoA (ligase route): step 1/1. Its function is as follows. Succinyl-CoA synthetase functions in the citric acid cycle (TCA), coupling the hydrolysis of succinyl-CoA to the synthesis of either ATP or GTP and thus represents the only step of substrate-level phosphorylation in the TCA. The beta subunit provides nucleotide specificity of the enzyme and binds the substrate succinate, while the binding sites for coenzyme A and phosphate are found in the alpha subunit. The sequence is that of Succinate--CoA ligase [ADP-forming] subunit beta from Salmonella choleraesuis (strain SC-B67).